Consider the following 372-residue polypeptide: 18-hydroxynorfluorocurarine reductase (372 aa).

Zn(2+) contacts are provided by Cys47, Asp50, His69, Glu70, Cys100, Cys103, Cys106, Cys114, and Cys172. Residues 197–202 (GLGGIG), Lys226, 283–285 (LGA), Ser307, and Arg354 each bind NADP(+).

It belongs to the zinc-containing alcohol dehydrogenase family. Homodimer. The cofactor is Zn(2+).

The enzyme catalyses (19E)-cur-19-en-17-al + NADP(+) = norfluorocurarine + NADPH + H(+). It carries out the reaction 17,18-epoxy-17-hydroxycur-19-ene + NADP(+) = 18-hydroxynorfluorocurarine + NADPH + H(+). The protein operates within alkaloid biosynthesis. In terms of biological role, alcohol dehydrogenase involved in the biosynthesis of curare monoterpene indole alkaloids (MIAs), natural products such as diaboline, a pharmacologically active compound used to regulate blood pressure. Curare alkaloids act as animal glycine receptor antagonists. Catalyzes the conversion of norfluorocurarine to desoxy Wieland-Gumlich aldehyde, and of 18-OH norfluorocurarine to Wieland-Gumlich aldehyde. The protein is 18-hydroxynorfluorocurarine reductase of Strychnos sp.